Consider the following 333-residue polypeptide: CRISPR-associated endonuclease Cas1 (333 aa).

Mn(2+) contacts are provided by E162, H226, and E241.

This sequence belongs to the CRISPR-associated endonuclease Cas1 family. As to quaternary structure, homodimer, forms a heterotetramer with a Cas2 homodimer. Requires Mg(2+) as cofactor. Mn(2+) serves as cofactor.

In terms of biological role, CRISPR (clustered regularly interspaced short palindromic repeat), is an adaptive immune system that provides protection against mobile genetic elements (viruses, transposable elements and conjugative plasmids). CRISPR clusters contain spacers, sequences complementary to antecedent mobile elements, and target invading nucleic acids. CRISPR clusters are transcribed and processed into CRISPR RNA (crRNA). Acts as a dsDNA endonuclease. Involved in the integration of spacer DNA into the CRISPR cassette. The chain is CRISPR-associated endonuclease Cas1 from Nanoarchaeum equitans (strain Kin4-M).